A 143-amino-acid polypeptide reads, in one-letter code: Large ribosomal subunit protein uL15 (143 aa).

Basic residues-rich tracts occupy residues 1-14 (MIRKSKKITKKRGS) and 23-38 (KKHRGAGHRGGRGNAG). The disordered stretch occupies residues 1–38 (MIRKSKKITKKRGSRTCGYGEAKKHRGAGHRGGRGNAG).

The protein belongs to the universal ribosomal protein uL15 family. In terms of assembly, part of the 50S ribosomal subunit.

Its function is as follows. Binds to the 23S rRNA. This Methanococcus maripaludis (strain DSM 14266 / JCM 13030 / NBRC 101832 / S2 / LL) protein is Large ribosomal subunit protein uL15.